The primary structure comprises 682 residues: Potassium-transporting ATPase ATP-binding subunit (682 aa).

4 helical membrane passes run 34–54 (PVMFIVWIGSLLTTCISIAMA), 62–82 (ALFSAAISGWLWVTVLFANFA), 219–239 (IALTILLIALTIVFLLATATL), and 254–274 (VLVALLVCLIPTTIGGLLSAI). Catalysis depends on aspartate 307, which acts as the 4-aspartylphosphate intermediate. ATP is bound by residues aspartate 344, glutamate 348, 377 to 384 (FTAQSRMS), and lysine 395. The Mg(2+) site is built by aspartate 518 and aspartate 522. Transmembrane regions (helical) follow at residues 588–608 (FAIIPAAFAATYPQLNALNIM), 616–636 (AILSAVIFNALIIVFLIPLAL), and 656–676 (IYGLGGLLVPFIGIKVIDLLL).

Belongs to the cation transport ATPase (P-type) (TC 3.A.3) family. Type IA subfamily. The system is composed of three essential subunits: KdpA, KdpB and KdpC.

It is found in the cell inner membrane. The catalysed reaction is K(+)(out) + ATP + H2O = K(+)(in) + ADP + phosphate + H(+). Its function is as follows. Part of the high-affinity ATP-driven potassium transport (or Kdp) system, which catalyzes the hydrolysis of ATP coupled with the electrogenic transport of potassium into the cytoplasm. This subunit is responsible for energy coupling to the transport system and for the release of the potassium ions to the cytoplasm. The protein is Potassium-transporting ATPase ATP-binding subunit of Escherichia coli (strain UTI89 / UPEC).